The chain runs to 357 residues: Dehydrogenase FUB6 (357 aa).

The protein belongs to the zinc-containing alcohol dehydrogenase family. Quinone oxidoreductase subfamily.

Its pathway is mycotoxin biosynthesis. In terms of biological role, dehydrogenase; part of the gene cluster that mediates the biosynthesis of fusaric acid, a mycotoxin with low to moderate toxicity to animals and humans, but with high phytotoxic properties. L-aspartate is suggested as fusaric acid amino acid precursor that is activated and further processed to O-acetyl-L-homoserine by cluster enzymes aspartate kinase FUB3 and homoserine O-acetyltransferase FUB5, as well as enzymes of the primary metabolism. The polyketide synthase (PKS) FUB1 generates the triketide trans-2-hexenal which is presumptively released by the hydrolase FUB4 and linked to the NRPS-bound amino acid precursor by NAD(P)-dependent dehydrogenase FUB6. FUB1, FUB4, and the non-canonical NRPS Fub8 may form an enzyme complex. Further processing of the NRPS-bound intermediate might be carried out by FUB6 and the O-acetylhomoserine FUB7, enabling a spontaneous electrocyclization to close the carbon backbone of fusaric acid. Dihydrofusaric acid is likely to be released via reduction by the thioester reductase (TR) domain of FUB8 whereupon the final oxidation to fusaric acid may (also) be performed by the FMN-dependent dehydrogenase FUB9. The polypeptide is Dehydrogenase FUB6 (Gibberella moniliformis (strain M3125 / FGSC 7600) (Maize ear and stalk rot fungus)).